The primary structure comprises 559 residues: CTP synthase (559 aa).

The segment at methionine 1–leucine 270 is amidoligase domain. Serine 13 is a CTP binding site. Residue serine 13 coordinates UTP. ATP contacts are provided by residues serine 14–isoleucine 19 and aspartate 71. Residues aspartate 71 and glutamate 144 each coordinate Mg(2+). CTP contacts are provided by residues aspartate 151–glutamate 153, lysine 191–glutamine 196, and lysine 227. UTP is bound by residues lysine 191–glutamine 196 and lysine 227. Positions threonine 295–serine 548 constitute a Glutamine amidotransferase type-1 domain. Glycine 357 lines the L-glutamine pocket. Residue cysteine 384 is the Nucleophile; for glutamine hydrolysis of the active site. Residues leucine 385 to glutamine 388, glutamate 408, and arginine 474 each bind L-glutamine. Catalysis depends on residues histidine 521 and glutamate 523.

It belongs to the CTP synthase family. In terms of assembly, homotetramer.

The catalysed reaction is UTP + L-glutamine + ATP + H2O = CTP + L-glutamate + ADP + phosphate + 2 H(+). The enzyme catalyses L-glutamine + H2O = L-glutamate + NH4(+). It carries out the reaction UTP + NH4(+) + ATP = CTP + ADP + phosphate + 2 H(+). The protein operates within pyrimidine metabolism; CTP biosynthesis via de novo pathway; CTP from UDP: step 2/2. Allosterically activated by GTP, when glutamine is the substrate; GTP has no effect on the reaction when ammonia is the substrate. The allosteric effector GTP functions by stabilizing the protein conformation that binds the tetrahedral intermediate(s) formed during glutamine hydrolysis. Inhibited by the product CTP, via allosteric rather than competitive inhibition. Catalyzes the ATP-dependent amination of UTP to CTP with either L-glutamine or ammonia as the source of nitrogen. Regulates intracellular CTP levels through interactions with the four ribonucleotide triphosphates. This Paracidovorax citrulli (strain AAC00-1) (Acidovorax citrulli) protein is CTP synthase.